Consider the following 255-residue polypeptide: Mediator of RNA polymerase II transcription subunit 18 (255 aa).

The protein belongs to the Mediator complex subunit 18 family. As to quaternary structure, component of the Mediator complex.

It is found in the nucleus. Functionally, component of the Mediator complex, a coactivator involved in the regulated transcription of nearly all RNA polymerase II-dependent genes. Mediator functions as a bridge to convey information from gene-specific regulatory proteins to the basal RNA polymerase II transcription machinery. Mediator is recruited to promoters by direct interactions with regulatory proteins and serves as a scaffold for the assembly of a functional preinitiation complex with RNA polymerase II and the general transcription factors. This is Mediator of RNA polymerase II transcription subunit 18 (SRB5) from Kluyveromyces lactis (strain ATCC 8585 / CBS 2359 / DSM 70799 / NBRC 1267 / NRRL Y-1140 / WM37) (Yeast).